The following is a 422-amino-acid chain: 3-isopropylmalate dehydratase large subunit (422 aa).

Positions 303, 363, and 366 each coordinate [4Fe-4S] cluster.

Belongs to the aconitase/IPM isomerase family. LeuC type 2 subfamily. Heterodimer of LeuC and LeuD. [4Fe-4S] cluster is required as a cofactor.

It carries out the reaction (2R,3S)-3-isopropylmalate = (2S)-2-isopropylmalate. It participates in amino-acid biosynthesis; L-leucine biosynthesis; L-leucine from 3-methyl-2-oxobutanoate: step 2/4. Its function is as follows. Catalyzes the isomerization between 2-isopropylmalate and 3-isopropylmalate, via the formation of 2-isopropylmaleate. This Wolinella succinogenes (strain ATCC 29543 / DSM 1740 / CCUG 13145 / JCM 31913 / LMG 7466 / NCTC 11488 / FDC 602W) (Vibrio succinogenes) protein is 3-isopropylmalate dehydratase large subunit.